Here is a 156-residue protein sequence, read N- to C-terminus: Transcription antitermination protein NusB (156 aa).

This sequence belongs to the NusB family.

Involved in transcription antitermination. Required for transcription of ribosomal RNA (rRNA) genes. Binds specifically to the boxA antiterminator sequence of the ribosomal RNA (rrn) operons. The protein is Transcription antitermination protein NusB of Bartonella quintana (strain Toulouse) (Rochalimaea quintana).